A 213-amino-acid polypeptide reads, in one-letter code: Redox-sensing transcriptional repressor Rex (213 aa).

Residues 18 to 57 constitute a DNA-binding region (H-T-H motif); sequence LYYRIFKRFHAEKIERANSKQIAEAIGIDSATVRRDFSYF. 92 to 97 contacts NAD(+); the sequence is GIGNMG.

Belongs to the transcriptional regulatory Rex family. As to quaternary structure, homodimer.

Its subcellular location is the cytoplasm. Functionally, modulates transcription in response to changes in cellular NADH/NAD(+) redox state. Binds to the promoter of the aldehyde-alcohol dehydrogenase adhE gene. Functions as a redox-dependent repressor of adhE expression. The protein is Redox-sensing transcriptional repressor Rex of Streptococcus pneumoniae serotype 19F (strain G54).